Reading from the N-terminus, the 353-residue chain is Alanine racemase (353 aa).

Lysine 34 (proton acceptor; specific for D-alanine) is an active-site residue. Residue lysine 34 is modified to N6-(pyridoxal phosphate)lysine. Arginine 128 lines the substrate pocket. Tyrosine 251 serves as the catalytic Proton acceptor; specific for L-alanine. Methionine 299 is a substrate binding site.

The protein belongs to the alanine racemase family. The cofactor is pyridoxal 5'-phosphate.

The catalysed reaction is L-alanine = D-alanine. Its pathway is amino-acid biosynthesis; D-alanine biosynthesis; D-alanine from L-alanine: step 1/1. Its function is as follows. Catalyzes the interconversion of L-alanine and D-alanine. May also act on other amino acids. This Alcanivorax borkumensis (strain ATCC 700651 / DSM 11573 / NCIMB 13689 / SK2) protein is Alanine racemase (alr).